We begin with the raw amino-acid sequence, 194 residues long: MEPLKTHTGTIAVLDRVNVDTDQIIPKQFLKRVERTGFGQFLFFDWRFLPNGEDNPDFELNQPHAKQGTILVAGHNFGCGSSREHAPWAIKDYGFRVVIAPSFADIFYNNCFKNGILPVKLKQEEVTALMEKGKDTAYSLTVNLEAQTVTSEDGFEATFEIDGYWKEMLINGWDEIGLTLRYEEQIKQFEASRV.

The protein belongs to the LeuD family. LeuD type 1 subfamily. In terms of assembly, heterodimer of LeuC and LeuD.

It carries out the reaction (2R,3S)-3-isopropylmalate = (2S)-2-isopropylmalate. The protein operates within amino-acid biosynthesis; L-leucine biosynthesis; L-leucine from 3-methyl-2-oxobutanoate: step 2/4. Its function is as follows. Catalyzes the isomerization between 2-isopropylmalate and 3-isopropylmalate, via the formation of 2-isopropylmaleate. In Halalkalibacterium halodurans (strain ATCC BAA-125 / DSM 18197 / FERM 7344 / JCM 9153 / C-125) (Bacillus halodurans), this protein is 3-isopropylmalate dehydratase small subunit.